Here is a 253-residue protein sequence, read N- to C-terminus: MHTKRIIPCLDVKEGRVVKGINFEGLVDVGDPVALAEYYNKQGADELVFLDITATHEKRGIMEKVVQSVAEKIFIPFTVGGGLQTLDDIKSILRAGADKVSLNSAAVRNKMLIKEGAFYFGSQCIVLAADAKKRSDNTGWNVVINGGRIDTGLDLLKWIEEATALGAGEILLTSMDADGTKKGFDLELTKAVSDITNVPVIASGGCGCLEDFYDVFKSNIADAALAASLFHYGELTVDEVKRYLHDKNVSVRI.

Active-site residues include D11 and D130.

This sequence belongs to the HisA/HisF family. As to quaternary structure, heterodimer of HisH and HisF.

It localises to the cytoplasm. The catalysed reaction is 5-[(5-phospho-1-deoxy-D-ribulos-1-ylimino)methylamino]-1-(5-phospho-beta-D-ribosyl)imidazole-4-carboxamide + L-glutamine = D-erythro-1-(imidazol-4-yl)glycerol 3-phosphate + 5-amino-1-(5-phospho-beta-D-ribosyl)imidazole-4-carboxamide + L-glutamate + H(+). Its pathway is amino-acid biosynthesis; L-histidine biosynthesis; L-histidine from 5-phospho-alpha-D-ribose 1-diphosphate: step 5/9. IGPS catalyzes the conversion of PRFAR and glutamine to IGP, AICAR and glutamate. The HisF subunit catalyzes the cyclization activity that produces IGP and AICAR from PRFAR using the ammonia provided by the HisH subunit. In Clostridium beijerinckii (strain ATCC 51743 / NCIMB 8052) (Clostridium acetobutylicum), this protein is Imidazole glycerol phosphate synthase subunit HisF.